The sequence spans 133 residues: uncharacterized protein (133 aa).

Transmembrane regions (helical) follow at residues 8–28 (MVLLLLLLLLLLLLLLLLLLL) and 46–66 (SFSILFLVSFSIGTFFSSIGA).

The protein localises to the membrane. This is an uncharacterized protein from Saccharomyces cerevisiae (strain ATCC 204508 / S288c) (Baker's yeast).